A 246-amino-acid chain; its full sequence is Ubiquinone biosynthesis O-methyltransferase (246 aa).

4 residues coordinate S-adenosyl-L-methionine: Arg-36, Gly-60, Asp-81, and Leu-123.

The protein belongs to the methyltransferase superfamily. UbiG/COQ3 family.

The catalysed reaction is a 3-demethylubiquinol + S-adenosyl-L-methionine = a ubiquinol + S-adenosyl-L-homocysteine + H(+). It catalyses the reaction a 3-(all-trans-polyprenyl)benzene-1,2-diol + S-adenosyl-L-methionine = a 2-methoxy-6-(all-trans-polyprenyl)phenol + S-adenosyl-L-homocysteine + H(+). It participates in cofactor biosynthesis; ubiquinone biosynthesis. Functionally, O-methyltransferase that catalyzes the 2 O-methylation steps in the ubiquinone biosynthetic pathway. The protein is Ubiquinone biosynthesis O-methyltransferase of Rickettsia typhi (strain ATCC VR-144 / Wilmington).